The chain runs to 457 residues: Peptidyl-prolyl cis-trans isomerase FKBP5 (457 aa).

Met1 carries the post-translational modification N-acetylmethionine. A compositionally biased stretch (basic and acidic residues) spans 1 to 11 (MTTDEGAKNSR). The tract at residues 1–27 (MTTDEGAKNSRENPTATVAEQGEDVTS) is disordered. Lys28 is modified (N6-acetyllysine). 2 consecutive PPIase FKBP-type domains span residues 50-138 (GDKV…LDFK) and 165-251 (GARV…KSFE). TPR repeat units follow at residues 268 to 301 (AAIV…LEME), 317 to 350 (LAAF…DSAN), and 351 to 384 (EKGL…NPQN). The disordered stretch occupies residues 423–457 (EEANKAMSKKTSEGVTNEKLAVSHAVEEEKPEGHV). Ser445 carries the phosphoserine modification. The segment covering 447-457 (AVEEEKPEGHV) has biased composition (basic and acidic residues).

Part of a heteromultimeric cytoplasmic complex with HSP90AA1, HSPA1A/HSPA1B and steroid receptors. Upon ligand binding dissociates from the complex and FKBP4 takes its place. Interacts with functionally mature heterooligomeric progesterone receptor complexes along with HSP90 and TEBP. Interacts with NR3C1. Interacts with Akt/AKT1 and PHLPP1; enhancing dephosphorylation and subsequent activation of Akt/AKT1. Interacts with IFI44L; this interaction modulates the kinase activity of IKBKB and IKBKE. Interacts with IKBKB and IKBKE. Acetylation impairs ability to promote interaction between Akt/AKT1 and PHLPP1. Deacetylation by SIRT7 promotes interaction between Akt/AKT1 and PHLPP1, leading to suppress Akt/AKT1 activation. Post-translationally, ubiquitinated, leading to degradation in a proteasome-dependent manner. Deubiquitinated by USP49, leading to stabilization.

The protein localises to the cytoplasm. It is found in the nucleus. It catalyses the reaction [protein]-peptidylproline (omega=180) = [protein]-peptidylproline (omega=0). Its activity is regulated as follows. Inhibited by both FK506 and rapamycin. Its function is as follows. Immunophilin protein with PPIase and co-chaperone activities. Component of unligated steroid receptors heterocomplexes through interaction with heat-shock protein 90 (HSP90). Plays a role in the intracellular trafficking of heterooligomeric forms of steroid hormone receptors maintaining the complex into the cytoplasm when unliganded. Acts as a regulator of Akt/AKT1 activity by promoting the interaction between Akt/AKT1 and PHLPP1, thereby enhancing dephosphorylation and subsequent activation of Akt/AKT1. Interacts with IKBKE and IKBKB which facilitates IKK complex assembly leading to increased IKBKE and IKBKB kinase activity, NF-kappaB activation, and IFN production. This chain is Peptidyl-prolyl cis-trans isomerase FKBP5 (FKBP5), found in Aotus nancymaae (Ma's night monkey).